The primary structure comprises 47 residues: Delta-actitoxin-Axm1d (47 aa).

Disulfide bonds link cysteine 4–cysteine 44, cysteine 6–cysteine 34, and cysteine 27–cysteine 45.

Belongs to the sea anemone sodium channel inhibitory toxin family. Type I subfamily.

Its subcellular location is the secreted. The protein resides in the nematocyst. Its function is as follows. Binds specifically to voltage-gated sodium channels (Nav), thereby delaying their inactivation during signal transduction. Thus it strongly stimulates mammalian cardiac muscle contraction. The protein is Delta-actitoxin-Axm1d of Anthopleura xanthogrammica (Giant green sea anemone).